The primary structure comprises 674 residues: Ribonuclease E (674 aa).

The S1 motif domain occupies 35-117 (GDIYLGLVDN…LTGNISMPGR (83 aa)). The Mg(2+) site is built by aspartate 296 and aspartate 339. Zn(2+)-binding residues include cysteine 397 and cysteine 400. 2 disordered regions span residues 458 to 529 (PLDL…RRVE) and 626 to 674 (QPRE…SSAE). 2 stretches are compositionally biased toward basic and acidic residues: residues 484-493 (GSEFSEKENI) and 509-529 (TKEKVTGTAPPRRERPSRRVE). A compositionally biased stretch (basic residues) spans 663–674 (RPGRRRRRSSAE). The C4 Arg-rich motif, probably responsible for interaction with PNPase signature appears at 665-673 (GRRRRRSSA).

It belongs to the RNase E/G family. In terms of assembly, fractionates in a 250-300 kDa region, which is too small to be the equivalent of an RNA degradosome, as occurs with E.coli RNase E. Interacts with polynucleotide phosphorylase (PNPase, pnp), probably via the C4 Arg-rich motif (residues 665-673). Mg(2+) serves as cofactor.

The protein resides in the cytoplasm. The protein localises to the cell inner membrane. The catalysed reaction is Endonucleolytic cleavage of single-stranded RNA in A- and U-rich regions.. Functionally, endoribonuclease that plays a central role in rRNA processing and mRNA decay, and probably tRNA processing. Acts on 9S rRNA (the precursor of 5S rRNA) and RNAI, a molecule that controls the replication of ColE1 plasmid. Upon expression in E.coli does not purify with endogenous degradosome proteins. Prefers 5'-monophosphorylated substrates over 5'-triphosphorylated substrates. Complements an rne temperature-sensitive mutation in E.coli, despite being considerably shorter and not able to interact with the E.coli degradosome. Cleaves AU-rich sequences in vitro, tested with psbA2 mRNA. Complements both an rne temperature-sensitive mutation and an rng deletion in E.coli. Acts in the degradation of psaL mRNA in the presence but not the absence of the sRNA PsrR1. Cleaves the rimO-crhR transcript, contributing to the very short half-life of rimO mRNA. Its function is as follows. mRNA for psbA2, one of the core proteins in photosystem II, is degraded in the dark under control of a cis-acting AU-rich box in its 5'-UTR. RNase E cuts in this box, suggesting it is involved in this dark-induced mRNA instability. CRISPR (clustered regularly interspaced short palindromic repeat) is an adaptive immune system that provides protection against mobile genetic elements (viruses, transposable elements and conjugative plasmids). CRISPR clusters contain spacers, sequences complementary to antecedent mobile elements, and target invading nucleic acids. CRISPR clusters are transcribed and processed into CRISPR RNA (crRNA). Endogenous RNase E is required for correct processing of pre-crRNA for the CRISPR3 subtype III-B system in this genome (genes sll7080 to sll7095). This CRISPR3 system does not include a cas6 gene, which is the usual RNase involved in crRNA maturation. The polypeptide is Ribonuclease E (Synechocystis sp. (strain ATCC 27184 / PCC 6803 / Kazusa)).